A 276-amino-acid polypeptide reads, in one-letter code: Rhomboid protease GlpG (276 aa).

6 consecutive transmembrane segments (helical) span residues Gly94–Ile114, Ile142–Gly162, Leu169–Gln189, Phe192–Trp212, Leu229–Met249, and Ala250–Leu270. Ser201 (nucleophile) is an active-site residue. Residue His254 is part of the active site.

It belongs to the peptidase S54 family.

It localises to the cell inner membrane. The catalysed reaction is Cleaves type-1 transmembrane domains using a catalytic dyad composed of serine and histidine that are contributed by different transmembrane domains.. Functionally, rhomboid-type serine protease that catalyzes intramembrane proteolysis. In Salmonella dublin (strain CT_02021853), this protein is Rhomboid protease GlpG.